Consider the following 324-residue polypeptide: MKNLKNKHFALLYLVLFLVLAKLSPFIITALIMGLYLSIIIDYVARFLEVFIKKPRVLPRVISNVLVFLTIAYSAVNFFPVIVREAQKVFSEIDRIRSGLENIDIPGWLSSILSSISASFSEGALSLVNKIVGYVPSFITAAILIVITAFIVSSLKRLIKENVHYLFPTNPSDGKEFLKTTYTEFERFVGGQVLVAIFVGLFVGFGAFIFKIPSAFFLGMLAFVTDFVPYLGVVISAIPLLMLAFSVHGLSGLLIGTIILVAANQLEMWVLAPKIQSNTLNVHWFIILIMILILGDLFSFGGVLIALPFLIFLKNFWKQYVMGG.

8 helical membrane-spanning segments follow: residues 12–32, 62–82, 105–125, 131–151, 190–210, 227–247, 252–272, and 285–305; these read LYLVLFLVLAKLSPFIITALI, ISNVLVFLTIAYSAVNFFPVI, IPGWLSSILSSISASFSEGAL, IVGYVPSFITAAILIVITAFI, GGQVLVAIFVGLFVGFGAFIF, FVPYLGVVISAIPLLMLAFSV, GLLIGTIILVAANQLEMWVLA, and FIILIMILILGDLFSFGGVLI.

It belongs to the autoinducer-2 exporter (AI-2E) (TC 2.A.86) family.

It localises to the cell membrane. This is Putative transport protein TM_1187 from Thermotoga maritima (strain ATCC 43589 / DSM 3109 / JCM 10099 / NBRC 100826 / MSB8).